The sequence spans 882 residues: MKGNEIRSRFLEYFKGNGHTVAESSSLVPKDDPTLLFTNAGMVQFKRVFMGDDKRGYVRAVTSQKCVRAGGKHNDLENVGYTARHHTFFEMLGNFSFGDYFKEEAIRLAWNFLTVELGLPAEKMWVSVFEDDDEAFALWEKVEDLPKGRIVRLGEKDNFWAMGDTGPCGPCSEIHIDQGVGSSPCDNPNCAVGCDCDRFLELWNLVFMQFNRAEDGSLTALPRPSIDTGMGLERVAAVLQGKFNNYDSDLFAPIIAVLEDISGVKYGAAADTDTAIRVIADHARATSFLVADGVLPSNEGRGYVLRRIMRRAVRYGKKLGLEKPFMDRVTKAVCAEMQNAYPQLVATAALLEKVVNNEEERFRETLEHGLVQLDEKISQLLTSGGDAVIDGPFIFKLYDTFGFPFDIVRDIALERGVGFDEAGFATAMAEQRAKSRASRKGEGVKLHDEGVKALADAGKKAEFLGYEGLEADSVVEGLLSEQGSGVEKLVAGEKGRVFVAATPFYAEAGGQMGDRGSVRWQGGQASVYATQAEGTGLILHDLLVEEGELSLGLEVTLQVDDEERKATASNHSATHLLQAALISVLGDHVKQSGSLVGPERLRFDFTNFSQLTAAEIAQVETLVNEQIRNNAVIATDVLSKQEAIAGGATALFGEKYDDDVRVVSMGDYSRELCGGTHVGATGEIGLFVILSESGIAAGVRRIEALTGRAALAYVQGRLSTGNELADLLSCKSGDLVPKVESLLTAVKEGEKRVAQLAGQLASSGLDDLLNNALTVAGIKVVVAEVPLENAKALRELGDKVRDNLESGIAVIGGAVGGKVALLAIVTKDLVDRIQAGRIVSEVSGIVGGKGGGRPDMAQAGGTMPDKLSEAIASVPAIIEAML.

Zn(2+) is bound by residues histidine 571, histidine 575, cysteine 673, and histidine 677.

Belongs to the class-II aminoacyl-tRNA synthetase family. Zn(2+) serves as cofactor.

The protein resides in the cytoplasm. The enzyme catalyses tRNA(Ala) + L-alanine + ATP = L-alanyl-tRNA(Ala) + AMP + diphosphate. Functionally, catalyzes the attachment of alanine to tRNA(Ala) in a two-step reaction: alanine is first activated by ATP to form Ala-AMP and then transferred to the acceptor end of tRNA(Ala). Also edits incorrectly charged Ser-tRNA(Ala) and Gly-tRNA(Ala) via its editing domain. This chain is Alanine--tRNA ligase, found in Desulfotalea psychrophila (strain LSv54 / DSM 12343).